We begin with the raw amino-acid sequence, 314 residues long: DNA-directed RNA polymerase subunit alpha (314 aa).

An alpha N-terminal domain (alpha-NTD) region spans residues 1–228; that stretch reads MAQYTIECVE…DQLRPLQEIT (228 aa). The alpha C-terminal domain (alpha-CTD) stretch occupies residues 241–314; the sequence is NTVGQVPIEE…SLPKDKPARS (74 aa).

Belongs to the RNA polymerase alpha chain family. In cyanobacteria the RNAP catalytic core is composed of 2 alpha, 1 beta, 1 beta', 1 gamma and 1 omega subunit. When a sigma factor is associated with the core the holoenzyme is formed, which can initiate transcription.

The catalysed reaction is RNA(n) + a ribonucleoside 5'-triphosphate = RNA(n+1) + diphosphate. In terms of biological role, DNA-dependent RNA polymerase catalyzes the transcription of DNA into RNA using the four ribonucleoside triphosphates as substrates. This chain is DNA-directed RNA polymerase subunit alpha, found in Gloeobacter violaceus (strain ATCC 29082 / PCC 7421).